The following is a 251-amino-acid chain: Uridylate kinase (251 aa).

Residue 19–22 (KLSG) participates in ATP binding. A UMP-binding site is contributed by Gly-61. Residues Gly-62 and Arg-66 each contribute to the ATP site. UMP contacts are provided by residues Asp-81 and 142–149 (IGNPFFTT). Thr-169, Gln-170, Tyr-175, and Asp-178 together coordinate ATP.

The protein belongs to the UMP kinase family. In terms of assembly, homohexamer.

The protein resides in the cytoplasm. The catalysed reaction is UMP + ATP = UDP + ADP. Its pathway is pyrimidine metabolism; CTP biosynthesis via de novo pathway; UDP from UMP (UMPK route): step 1/1. Its activity is regulated as follows. Inhibited by UTP. Catalyzes the reversible phosphorylation of UMP to UDP. This Hyphomonas neptunium (strain ATCC 15444) protein is Uridylate kinase.